Reading from the N-terminus, the 380-residue chain is ATPase ASNA1 homolog (380 aa).

Position 48 to 55 (K48 to T55) interacts with ATP. D77 is a catalytic residue. ATP is bound by residues E248 and N275.

This sequence belongs to the arsA ATPase family. As to quaternary structure, homodimer.

The protein resides in the cytoplasm. It is found in the endoplasmic reticulum. Functionally, ATPase required for the post-translational delivery of tail-anchored (TA) proteins to the endoplasmic reticulum. Recognizes and selectively binds the transmembrane domain of TA proteins in the cytosol. This complex then targets to the endoplasmic reticulum by membrane-bound receptors, where the tail-anchored protein is released for insertion. This process is regulated by ATP binding and hydrolysis. ATP binding drives the homodimer towards the closed dimer state, facilitating recognition of newly synthesized TA membrane proteins. ATP hydrolysis is required for insertion. Subsequently, the homodimer reverts towards the open dimer state, lowering its affinity for the membrane-bound receptor, and returning it to the cytosol to initiate a new round of targeting. This Plasmodium chabaudi chabaudi protein is ATPase ASNA1 homolog.